Consider the following 226-residue polypeptide: uncharacterized protein (226 aa).

4 helical membrane-spanning segments follow: residues 25-45 (ALAW…IFLI), 54-74 (FLLF…YFIF), 107-127 (ELFL…YFFI), and 153-173 (TITI…CFSS).

It is found in the cell membrane. This is an uncharacterized protein from Mycoplasma genitalium (strain ATCC 33530 / DSM 19775 / NCTC 10195 / G37) (Mycoplasmoides genitalium).